Here is a 576-residue protein sequence, read N- to C-terminus: Proline--tRNA ligase (576 aa).

Belongs to the class-II aminoacyl-tRNA synthetase family. ProS type 1 subfamily. As to quaternary structure, homodimer.

It is found in the cytoplasm. It catalyses the reaction tRNA(Pro) + L-proline + ATP = L-prolyl-tRNA(Pro) + AMP + diphosphate. Functionally, catalyzes the attachment of proline to tRNA(Pro) in a two-step reaction: proline is first activated by ATP to form Pro-AMP and then transferred to the acceptor end of tRNA(Pro). As ProRS can inadvertently accommodate and process non-cognate amino acids such as alanine and cysteine, to avoid such errors it has two additional distinct editing activities against alanine. One activity is designated as 'pretransfer' editing and involves the tRNA(Pro)-independent hydrolysis of activated Ala-AMP. The other activity is designated 'posttransfer' editing and involves deacylation of mischarged Ala-tRNA(Pro). The misacylated Cys-tRNA(Pro) is not edited by ProRS. This is Proline--tRNA ligase from Leptospira borgpetersenii serovar Hardjo-bovis (strain L550).